Consider the following 551-residue polypeptide: Solute carrier family 22 member 6 (551 aa).

The Cytoplasmic portion of the chain corresponds to 1 to 9 (MAFNDLLKQ). The chain crosses the membrane as a helical span at residues 10-30 (VGGVGRFQLIQVTMVVAPLLL). The Extracellular segment spans residues 31–135 (MASHNTLQNF…LVCSHRAFRQ (105 aa)). 4 N-linked (GlcNAc...) asparagine glycosylation sites follow: N39, N56, N92, and N113. The helical transmembrane segment at 136–156 (LAQSLYMVGVLLGAMVFGYLA) threads the bilayer. The Cytoplasmic portion of the chain corresponds to 157–164 (DRLGRRKV). The chain crosses the membrane as a helical span at residues 165 to 187 (LILNYLQTAVSGTCAAYAPNYTV). Residues 188–195 (YCVFRLLS) are Extracellular-facing. Residues 196-216 (GMSLASIAINCMTLNVEWMPI) traverse the membrane as a helical segment. The Cytoplasmic segment spans residues 217-224 (HTRAYVGT). Residues 225–245 (LIGYVYSLGQFLLAGIAYAVP) form a helical membrane-spanning segment. The Extracellular segment spans residues 246-248 (HWR). A helical membrane pass occupies residues 249-269 (HLQLVVSVPFFIAFIYSWFFI). The Cytoplasmic segment spans residues 270 to 337 (ESARWYSSSG…ELLRCPTLRH (68 aa)). A helical transmembrane segment spans residues 338-358 (LFLCLSMLWFATSFAYYGLVM). Residues 359–368 (DLQGFGVSMY) lie on the Extracellular side of the membrane. The helical transmembrane segment at 369–389 (LIQVIFGAVDLPAKFVCFLVI) threads the bilayer. The Cytoplasmic portion of the chain corresponds to 390–395 (NSMGRR). A helical transmembrane segment spans residues 396–416 (PAQMASLLLAGICILVNGIIP). Over 417 to 425 (KSHTIIRTS) the chain is Extracellular. Residues 426–446 (LAVLGKGCLASSFNCIFLYTG) traverse the membrane as a helical segment. At 447–484 (ELYPTVIRQTGLGMGSTMARVGSIVSPLVSMTAEFYPS) the chain is on the cytoplasmic side. A helical membrane pass occupies residues 485 to 505 (MPLFIFGAVPVVASAVTALLP). Over 506 to 551 (ETLGQPLPDTVQDLKSRSRGKQNQQQQEQQKQMMPLQASTQEKNGL) the chain is Extracellular. The disordered stretch occupies residues 514–551 (DTVQDLKSRSRGKQNQQQQEQQKQMMPLQASTQEKNGL). Low complexity predominate over residues 526–537 (KQNQQQQEQQKQ). The span at 542 to 551 (QASTQEKNGL) shows a compositional bias: polar residues.

Belongs to the major facilitator (TC 2.A.1) superfamily. Organic cation transporter (TC 2.A.1.19) family. Glycosylated. Glycosylation is necessary for proper targeting of the transporter to the plasma membrane. As to expression, highly expressed in kidney; in the particular segment of the proximal tubule. In kidney, found preferentially in the cortex and outer medulla and weakly in the inner medulla. Expressed to a lower extent in brain.

The protein localises to the cell membrane. It localises to the basolateral cell membrane. The protein resides in the basal cell membrane. It carries out the reaction (6R)-L-erythro-5,6,7,8-tetrahydrobiopterin(out) + a dicarboxylate(in) = (6R)-L-erythro-5,6,7,8-tetrahydrobiopterin(in) + a dicarboxylate(out). The enzyme catalyses L-erythro-7,8-dihydrobiopterin(out) + a dicarboxylate(in) = L-erythro-7,8-dihydrobiopterin(in) + a dicarboxylate(out). The catalysed reaction is L-sepiapterin(out) + a dicarboxylate(in) = L-sepiapterin(in) + a dicarboxylate(out). It catalyses the reaction prostaglandin F2alpha(out) + a dicarboxylate(in) = prostaglandin F2alpha(in) + a dicarboxylate(out). It carries out the reaction prostaglandin E2(out) + a dicarboxylate(in) = prostaglandin E2(in) + a dicarboxylate(out). The enzyme catalyses 3',5'-cyclic AMP(out) + a dicarboxylate(in) = 3',5'-cyclic AMP(in) + a dicarboxylate(out). The catalysed reaction is 3',5'-cyclic GMP(out) + a dicarboxylate(in) = 3',5'-cyclic GMP(in) + a dicarboxylate(out). It catalyses the reaction urate(out) + a dicarboxylate(in) = urate(in) + a dicarboxylate(out). It carries out the reaction kynurenate(out) + glutarate(in) = kynurenate(in) + glutarate(out). The enzyme catalyses (indol-3-yl)acetate(out) + a dicarboxylate(in) = (indol-3-yl)acetate(in) + a dicarboxylate(out). The catalysed reaction is indoxyl sulfate(out) + a dicarboxylate(in) = indoxyl sulfate(in) + a dicarboxylate(out). It catalyses the reaction N-benzoylglycine(out) + a dicarboxylate(in) = N-benzoylglycine(in) + a dicarboxylate(out). It carries out the reaction 3-carboxy-4-methyl-5-propyl-2-furanpropanoate(out) + a dicarboxylate(in) = 3-carboxy-4-methyl-5-propyl-2-furanpropanoate(in) + a dicarboxylate(out). In terms of biological role, secondary active transporter that functions as a Na(+)-independent organic anion (OA)/dicarboxylate antiporter where the uptake of one molecule of OA into the cell is coupled with an efflux of one molecule of intracellular dicarboxylate such as alpha-ketoglutarate or glutarate. Mediates the uptake of OA across the basolateral side of proximal tubule epithelial cells, thereby contributing to the renal elimination of endogenous OA from the systemic circulation into the urine. Function as a biopterin transporters involved in the uptake and the secretion of coenzymes tetrahydrobiopterin (BH4) dihydrobiopterin (BH2) and sepiapterin to urine, thereby determining baseline levels of blood biopterins. Transports prostaglandin E2 (PGE2) and prostaglandin F2-alpha (PGF2-alpha) and may contribute to their renal excretion. Also mediates the uptake of cyclic nucleotides such as cAMP and cGMP. Involved in the transport of neuroactive tryptophan metabolites kynurenate (KYNA) and xanthurenate (XA) and may contribute to their secretion from the brain. May transport glutamate. Also involved in the disposition of uremic toxins and potentially toxic xenobiotics by the renal organic anion secretory pathway, helping reduce their undesired toxicological effects on the body. Uremic toxins include the indoxyl sulfate (IS), hippurate, indole acetate (IA), 3-carboxy-4- methyl-5-propyl-2-furanpropionate(CMPF) and urate. Xenobiotics include the mycotoxin ochratoxin (OTA). May also contribute to the transport of organic compounds in testes across the blood-testis-barrier. May also work as a bidirectional OA/dicarboxylate exchanger. This chain is Solute carrier family 22 member 6, found in Rattus norvegicus (Rat).